Consider the following 502-residue polypeptide: RNA polymerase sigma factor sigA (502 aa).

The N-terminal 23 residues, 1-23 (MATAAVIGLNTGKRLLSSSFYHS), are a transit peptide targeting the chloroplast. The span at 57-71 (YSPSFPSSNRHTQSA) shows a compositional bias: polar residues. A disordered region spans residues 57–92 (YSPSFPSSNRHTQSAKALKESVDVASTEKPWLPNGT). Thr170 bears the Phosphothreonine mark. Residues 287–300 (DLVQGGLIGLLRGI) carry the Polymerase core binding motif. Positions 461 to 480 (WEDISKRIGLSRERVRQVGL) form a DNA-binding region, H-T-H motif.

Belongs to the sigma-70 factor family. Interacts with SIB1 in chloroplast. Binds to CSK. The phosphorylation of Thr-170 mediated by oxidative conditions of plastoquinone (PQ) changes the promoter specificity, selectively inhibiting the transcription of the psaA gene, which encodes a PS-I protein. Phosphorylation of the holoenzyme occurs in the dark. This phosphorylation in response to plastoquinone redox state modification is mediated by CSK. As to expression, highly expressed in leaves, and to a lesser extent in roots. Expressed in old seedlings (8 days), cotyledons, hypocotyls, leaves, sepals and siliques.

Its subcellular location is the plastid. It localises to the chloroplast. In terms of biological role, essential protein. Sigma factors are initiation factors that promote the attachment of plastid-encoded RNA polymerase (PEP) to specific initiation sites and are then released. Controls the transcription of the psaA gene and thus modulates photosystem stoichiometry. Thereby maintains a harmonious electron flow and photosynthetic efficiency. This chain is RNA polymerase sigma factor sigA (SIGA), found in Arabidopsis thaliana (Mouse-ear cress).